The primary structure comprises 217 residues: Thymidylate kinase (217 aa).

7-14 (GIDGAGKS) contacts ATP.

The protein belongs to the thymidylate kinase family.

It carries out the reaction dTMP + ATP = dTDP + ADP. Functionally, phosphorylation of dTMP to form dTDP in both de novo and salvage pathways of dTTP synthesis. In Pelodictyon phaeoclathratiforme (strain DSM 5477 / BU-1), this protein is Thymidylate kinase.